A 177-amino-acid chain; its full sequence is Bifunctional protein PyrR (177 aa).

The short motif at 99–111 (VVLVDDVLYTGRT) is the PRPP-binding element.

This sequence belongs to the purine/pyrimidine phosphoribosyltransferase family. PyrR subfamily. In terms of assembly, homodimer and homohexamer; in equilibrium.

It catalyses the reaction UMP + diphosphate = 5-phospho-alpha-D-ribose 1-diphosphate + uracil. Regulates transcriptional attenuation of the pyrimidine nucleotide (pyr) operon by binding in a uridine-dependent manner to specific sites on pyr mRNA. This disrupts an antiterminator hairpin in the RNA and favors formation of a downstream transcription terminator, leading to a reduced expression of downstream genes. Functionally, also displays a weak uracil phosphoribosyltransferase activity which is not physiologically significant. The chain is Bifunctional protein PyrR from Clostridioides difficile (strain 630) (Peptoclostridium difficile).